The sequence spans 149 residues: Oligosaccharyltransferase complex subunit OSTC (149 aa).

At 1–32 (METLYRVPFLVLECPNLKLKKPPWLHMPSAMT) the chain is on the cytoplasmic side. The chain crosses the membrane as a helical span at residues 33-53 (VYALVVVSYFLITGGIIYDVI). The Extracellular segment spans residues 54-83 (VEPPSVGSMTDEHGHQRPVAFLAYRVNGQY). Residues 84 to 104 (IMEGLASSFLFTMGGLGFIIL) traverse the membrane as a helical segment. Over 105 to 117 (DRSNAPNIPKLNR) the chain is Cytoplasmic. A helical transmembrane segment spans residues 118–138 (FLLLFIGFVCVLLSFFMARVF). Residues 139 to 149 (MRMKLPGYLMG) lie on the Extracellular side of the membrane.

Belongs to the OSTC family. In terms of assembly, component of STT3A-containing oligosaccharyl transferase (OST-A) complex. STT3A-containing complex assembly occurs through the formation of 3 subcomplexes. Subcomplex 1 contains RPN1 and TMEM258, subcomplex 2 contains the STT3A-specific subunits STT3A, DC2/OSTC, and KCP2 as well as the core subunit OST4, and subcomplex 3 contains RPN2, DAD1, and OST48. The OST-A complex can form stable complexes with the Sec61 complex or with both the Sec61 and TRAP complexes. Interacts with PSEN1 and NCSTN; indicative for an association with the gamma-secretase complex.

The protein resides in the endoplasmic reticulum. The protein localises to the membrane. It participates in protein modification; protein glycosylation. Subunit of STT3A-containing oligosaccharyl transferase (OST-A) complex that catalyzes the initial transfer of a defined glycan (Glc(3)Man(9)GlcNAc(2) in eukaryotes) from the lipid carrier dolichol-pyrophosphate to an asparagine residue within an Asn-X-Ser/Thr consensus motif in nascent polypeptide chains, the first step in protein N-glycosylation. N-glycosylation occurs cotranslationally and the complex associates with the Sec61 complex at the channel-forming translocon complex that mediates protein translocation across the endoplasmic reticulum (ER). Within the OST-A complex, acts as an adapter that anchors the OST-A complex to the Sec61 complex. May be involved in N-glycosylation of APP (amyloid-beta precursor protein). Can modulate gamma-secretase cleavage of APP by enhancing endoprotelysis of PSEN1. The chain is Oligosaccharyltransferase complex subunit OSTC from Homo sapiens (Human).